The primary structure comprises 1368 residues: MQYSFTEKKRIRKSFAKRPIVHQVPFLLATQLESFSTFLQADVPATQRKPEGLQAAFTSVFPIVSHNGFARLEFVSYALSSPAFNIKECQQRGLTYCSALRAKVRLVILDKESPNKPVVKEVKEQEVYMGEIPLMTPTGSFVINGTERVIVSQLHRSPGVFFEHDKGKTHSSGKLLFSARIIPYRGSWLDFEFDPKDILYFRVDRRRKMPVTILLKAIGLTPEQILANFFVFDNFTLMDEGAQLEFVPERLRGEVARFDITDRDGKVIVQKDKRINAKHIRDLEAAKTKFISVPEDYLLGRVLAKNVVDGDTGEVIASANDEVTESVLEKLREAGIKDIQTLYTNDLDQGPYISSTLRVDETTDKTAARIAIHRMMRPGEPPTEEAVEALFNRLFYSEEAYDLSKVGRMKFNRRVGRDEIVGPMTLQDDDILATIKILVELRNGKGEVDDIDHLGNRRVRCVGELAENQFRAGLVRVERAVKERLGQAESENLMPHDLINSKPISSAIREFFGSSQLSQFMDQTNPLSEITHKRRVSALGPGGLTRERAGFEVRDVHPTHYGRVCPIETPEGPNIGLINSLALYAHLNEYGFLETPYRKVVDSKVTDQIDYLSAIEEGRYMIAQANAAIDEDGRLIDELVSSREAGETMMVTPDRIQYMDVAPSQIVSVAASLIPFLEHDDANRALMGSNMQRQAVPCLRPEKPVVGTGIERTCAVDSGTTVQAFRGGVVDYVDAGRIVIRVNDDEAVAGEVGVDIYNLIKYTRSNQNTNINQRPIVKMGDKVSRGDVLADGASTDLGELALGQNMLIAFMPWNGYNFEDSILISEKVVADDRYTSIHIEELNVVARDTKLGPEEITRDISNLAEVQLGRLDESGIVYIGAEVEAGDVLVGKVTPKGETQLTPEEKLLRAIFGEKASDVKDTSLRVPSGMSGTVIDVQVFTREGIQRDKRAQQIIDDELKRYRLDLNDQLRIVEGDAFQRLARMLVGKVANGGPKKLAKGTKIDQAYLEDLDHYHWFDIRLADDEAAASLEAIKNSIEEKRHQFDLAFEEKRKKLTQGDELPPGVLKMVKVYLAVKRRLQPGDKMAGRHGNKGVVSKIVPIEDMPYMADGRPADVVLNPLGVPSRMNVGQVLEVHLGWAAKGLGWRIGEMLQRQAKIEELRTFLTKIYNESGRQEDLESFTDDEILELAKNLREGVPFATPVFDGATEEEMGKMLDLAFPDDIAEQLGMNPSKNQVRLYDGRTGEMFERRVTLGYMHYLKLHHLVDDKMHARSTGPYSLVTQQPLGGKAQFGGQRFGEMEVWALEAYGASYVLQEMLTVKSDDVTGRTKVYENLVKGDHVIDAGMPESFNVLVKEIRSLGIDIDLDRN.

Belongs to the RNA polymerase beta chain family. In terms of assembly, the RNAP catalytic core consists of 2 alpha, 1 beta, 1 beta' and 1 omega subunit. When a sigma factor is associated with the core the holoenzyme is formed, which can initiate transcription.

It catalyses the reaction RNA(n) + a ribonucleoside 5'-triphosphate = RNA(n+1) + diphosphate. In terms of biological role, DNA-dependent RNA polymerase catalyzes the transcription of DNA into RNA using the four ribonucleoside triphosphates as substrates. This is DNA-directed RNA polymerase subunit beta from Burkholderia cenocepacia (strain ATCC BAA-245 / DSM 16553 / LMG 16656 / NCTC 13227 / J2315 / CF5610) (Burkholderia cepacia (strain J2315)).